The sequence spans 323 residues: tRNA N6-adenosine threonylcarbamoyltransferase (323 aa).

The Fe cation site is built by His106, His110, and Tyr127. Residues 127-131 (YVSGA), Asp159, Gly172, Glu176, and Asn255 each bind substrate. Asp283 is a binding site for Fe cation.

Belongs to the KAE1 / TsaD family. Monomer. Component of the KEOPS complex that consists of Kae1, Bud32, Cgi121 and Pcc1; the whole complex dimerizes. The cofactor is Fe(2+).

Its subcellular location is the cytoplasm. It catalyses the reaction L-threonylcarbamoyladenylate + adenosine(37) in tRNA = N(6)-L-threonylcarbamoyladenosine(37) in tRNA + AMP + H(+). Required for the formation of a threonylcarbamoyl group on adenosine at position 37 (t(6)A37) in tRNAs that read codons beginning with adenine. Is a component of the KEOPS complex that is probably involved in the transfer of the threonylcarbamoyl moiety of threonylcarbamoyl-AMP (TC-AMP) to the N6 group of A37. Kae1 likely plays a direct catalytic role in this reaction, but requires other protein(s) of the complex to fulfill this activity. The polypeptide is tRNA N6-adenosine threonylcarbamoyltransferase (Methanocella arvoryzae (strain DSM 22066 / NBRC 105507 / MRE50)).